Reading from the N-terminus, the 375-residue chain is Alcohol dehydrogenase 6 (375 aa).

The Zn(2+) site is built by Cys47, His69, Cys99, Cys102, Cys105, Cys113, and Cys175. NAD(+) is bound by residues 200–205 (GLGGVG), Asp224, Lys229, 293–295 (VGS), and Arg370.

This sequence belongs to the zinc-containing alcohol dehydrogenase family. Class-V subfamily. As to quaternary structure, dimer. It depends on Zn(2+) as a cofactor. In terms of tissue distribution, liver.

The protein localises to the cytoplasm. It carries out the reaction a primary alcohol + NAD(+) = an aldehyde + NADH + H(+). The catalysed reaction is a secondary alcohol + NAD(+) = a ketone + NADH + H(+). Its function is as follows. Alcohol dehydrogenase. Catalyzes the NAD-dependent oxidation of primary alcohols to the corresponding aldehydes. Oxidizes secondary alcohols to the corresponding ketones. The chain is Alcohol dehydrogenase 6 (ADH6) from Peromyscus maniculatus (North American deer mouse).